The primary structure comprises 914 residues: Translation initiation factor IF-2 (914 aa).

Disordered regions lie at residues 246 to 271 (EDGE…KKKG) and 293 to 313 (SGMD…QRRM). Over residues 249-266 (EAAKKKAAKPDGGEDVGV) the composition is skewed to basic and acidic residues. The region spanning 411–581 (TRPPVVTIMG…LAEAEIRELK (171 aa)) is the tr-type G domain. Residues 420 to 427 (GHVDHGKT) form a G1 region. 420 to 427 (GHVDHGKT) is a binding site for GTP. A G2 region spans residues 445–449 (GITQH). The interval 467 to 470 (DTPG) is G3. GTP contacts are provided by residues 467 to 471 (DTPGH) and 521 to 524 (NKID). Residues 521–524 (NKID) are G4. The G5 stretch occupies residues 557 to 559 (SAK).

Belongs to the TRAFAC class translation factor GTPase superfamily. Classic translation factor GTPase family. IF-2 subfamily.

It is found in the cytoplasm. One of the essential components for the initiation of protein synthesis. Protects formylmethionyl-tRNA from spontaneous hydrolysis and promotes its binding to the 30S ribosomal subunits. Also involved in the hydrolysis of GTP during the formation of the 70S ribosomal complex. The protein is Translation initiation factor IF-2 of Chlorobaculum tepidum (strain ATCC 49652 / DSM 12025 / NBRC 103806 / TLS) (Chlorobium tepidum).